Here is a 421-residue protein sequence, read N- to C-terminus: Elongation factor 1-alpha (421 aa).

In terms of domain architecture, tr-type G spans 4–220; it reads NRHQNLAVIG…NGLPVPQPPT (217 aa). The interval 13–20 is G1; sequence GHVDHGKS. 13-20 lines the GTP pocket; the sequence is GHVDHGKS. Residue S20 coordinates Mg(2+). Residues 69–73 are G2; it reads GVTID. The interval 90–93 is G3; the sequence is DCPG. Residues 90 to 94 and 145 to 148 contribute to the GTP site; these read DCPGH and NKMD. The tract at residues 145-148 is G4; sequence NKMD. The interval 184 to 186 is G5; the sequence is SAF.

Belongs to the TRAFAC class translation factor GTPase superfamily. Classic translation factor GTPase family. EF-Tu/EF-1A subfamily.

The protein resides in the cytoplasm. It catalyses the reaction GTP + H2O = GDP + phosphate + H(+). Its function is as follows. GTP hydrolase that promotes the GTP-dependent binding of aminoacyl-tRNA to the A-site of ribosomes during protein biosynthesis. This Halobacterium salinarum (strain ATCC 700922 / JCM 11081 / NRC-1) (Halobacterium halobium) protein is Elongation factor 1-alpha.